The following is a 351-amino-acid chain: Probable aldo-keto reductase 2 (351 aa).

The Proton donor role is filled by Y67. H134 contributes to the substrate binding site. Residue S213–G223 participates in NADP(+) binding. Residues Y317–Q351 are disordered. Residues M332 to Q351 show a composition bias toward polar residues.

Belongs to the aldo/keto reductase family.

The sequence is that of Probable aldo-keto reductase 2 from Oryza sativa subsp. japonica (Rice).